Consider the following 497-residue polypeptide: Ammonium transporter Rh type C (497 aa).

Residues 1-9 (MAWNTNLRG) are Cytoplasmic-facing. The helical transmembrane segment at 10 to 30 (RLPITCLILQVTMVVLFGVFV) threads the bilayer. Topologically, residues 31–61 (RYDIQADAHWWLEKKRKNISSDVENEFYYRY) are extracellular. Asn-48 carries N-linked (GlcNAc...) asparagine glycosylation. A helical membrane pass occupies residues 62–82 (PSFEDVHAMVFVGFGFLMTYL). Residues 83-93 (QRYGFSAVGFN) are Cytoplasmic-facing. Residues 94 to 114 (FLLAAFGIQWALLMQGWFHFF) form a helical membrane-spanning segment. Over 115–125 (EEGHILLSVEN) the chain is Extracellular. The helical transmembrane segment at 126–145 (LIQADFCVASTCVAFGAVLG) threads the bilayer. The Cytoplasmic portion of the chain corresponds to 146–151 (KISPMQ). Residues 152 to 174 (LLIMTFFQVTLFTVNEFILLNLI) traverse the membrane as a helical segment. Topologically, residues 175-179 (EAKDA) are extracellular. Residues 180–200 (GGSMTIHTFGAYFGLTVTWIL) form a helical membrane-spanning segment. Over 201–219 (YRKNLEQSKQRQSSVYHSD) the chain is Cytoplasmic. The chain crosses the membrane as a helical span at residues 220–240 (LFAMIGTLFLWIYWPSFNSAS). The Extracellular segment spans residues 241–251 (SFHGDTQHRAA). The helical transmembrane segment at 252 to 272 (LNTYLSLAASVLTTVAVSSVI) threads the bilayer. At 273–282 (HKKGKLDMVH) the chain is on the cytoplasmic side. The helical transmembrane segment at 283-303 (IQNATLAGGVGVGTAAEMMLT) threads the bilayer. Pro-304 is a topological domain (extracellular). The helical transmembrane segment at 305-325 (YGALIVGFFCGILSTLGFAYL) threads the bilayer. Topologically, residues 326 to 340 (SPFLESRLRIQDTCG) are cytoplasmic. Residues 341 to 361 (IHNLHGIPGIIGGIVGAVTAA) form a helical membrane-spanning segment. Over 362–395 (YSSPDVYGEPGIVHSFGFGGYKADWTKRMQGRSQ) the chain is Extracellular. The helical transmembrane segment at 396-416 (IFGLLLSLAMALVGGIIVGFI) threads the bilayer. Residues 417–497 (LKLPFWGQAS…ATVTSSSLVH (81 aa)) lie on the Cytoplasmic side of the membrane.

Belongs to the ammonium transporter (TC 2.A.49) family. Rh subfamily. Homotrimer. N-glycosylated. Expressed by connecting tubule cells and intercalated cells of the collecting duct in kidney (at protein level).

It localises to the cell membrane. It is found in the apical cell membrane. The enzyme catalyses NH4(+)(in) = NH4(+)(out). It carries out the reaction methylamine(out) = methylamine(in). It catalyses the reaction CO2(out) = CO2(in). In terms of biological role, ammonium transporter involved in the maintenance of acid-base homeostasis. Transports ammonium and its related derivative methylammonium across the plasma membrane of epithelial cells likely contributing to renal transepithelial ammonia transport and ammonia metabolism. Postulated to primarily mediate an electroneutral bidirectional transport of NH3 ammonia species according to a mechanism that implies interaction of an NH4(+) ion with acidic residues of the pore entry followed by dissociation of NH4(+) into NH3 and H(+). As a result NH3 transits through the central pore and is protonated on the extracellular side reforming NH4(+). May act as a CO2 channel providing for renal acid secretion. The protein is Ammonium transporter Rh type C (Rhcg) of Rattus norvegicus (Rat).